A 731-amino-acid polypeptide reads, in one-letter code: Ribonuclease R (731 aa).

The RNB domain maps to 260–589 (RTDLRHFPFF…LHRVIKYLLF (330 aa)). Residues 647 to 728 (GCILNGVISN…NEKKIELSLY (82 aa)) enclose the S1 motif domain.

It belongs to the RNR ribonuclease family. RNase R subfamily. As to quaternary structure, monomer.

The protein localises to the cytoplasm. The catalysed reaction is Exonucleolytic cleavage in the 3'- to 5'-direction to yield nucleoside 5'-phosphates.. In terms of biological role, 3'-5' exoribonuclease that releases 5'-nucleoside monophosphates and is involved in maturation of structured RNAs. In Buchnera aphidicola subsp. Acyrthosiphon pisum (strain APS) (Acyrthosiphon pisum symbiotic bacterium), this protein is Ribonuclease R.